A 207-amino-acid polypeptide reads, in one-letter code: Large ribosomal subunit protein uL18 (207 aa).

Belongs to the universal ribosomal protein uL18 family. In terms of assembly, part of the 50S ribosomal subunit. Contacts the 5S and 23S rRNAs.

Functionally, this is one of the proteins that bind and probably mediate the attachment of the 5S RNA into the large ribosomal subunit, where it forms part of the central protuberance. The polypeptide is Large ribosomal subunit protein uL18 (Caldivirga maquilingensis (strain ATCC 700844 / DSM 13496 / JCM 10307 / IC-167)).